Here is an 85-residue protein sequence, read N- to C-terminus: uncharacterized protein (85 aa).

It belongs to the ycf76 family.

Its subcellular location is the plastid. The protein resides in the chloroplast. This is an uncharacterized protein from Saccharum hybrid (Sugarcane).